We begin with the raw amino-acid sequence, 277 residues long: NH(3)-dependent NAD(+) synthetase (277 aa).

ATP is bound at residue Gly36 to Ser43. Mg(2+) is bound at residue Asp42. Arg118 lines the deamido-NAD(+) pocket. Thr138 serves as a coordination point for ATP. Glu143 serves as a coordination point for Mg(2+). Residues Lys167 and Ser189 each contribute to the ATP site.

It belongs to the NAD synthetase family. In terms of assembly, homodimer.

It catalyses the reaction deamido-NAD(+) + NH4(+) + ATP = AMP + diphosphate + NAD(+) + H(+). Its pathway is cofactor biosynthesis; NAD(+) biosynthesis; NAD(+) from deamido-NAD(+) (ammonia route): step 1/1. Functionally, catalyzes the ATP-dependent amidation of deamido-NAD to form NAD. Uses ammonia as a nitrogen source. This Chlorobium phaeobacteroides (strain DSM 266 / SMG 266 / 2430) protein is NH(3)-dependent NAD(+) synthetase.